The following is a 179-amino-acid chain: MAATEPILATTGSPAAVPPEKLEGTGSSSAPERNCVGSSLPEASPPAPEPSSPNAAVPEAIPTPRAAASAALELPLGPAPVSVAPQAEAEARSTPGPAGSRLGPETFRQRFRQFRYQDAAGPREAFRQLRELSRQWLRPDIRTKEQIVEMLVQEQLLAILPEAARARRIRRRTDVRITG.

The interval 1–107 (MAATEPILAT…AGSRLGPETF (107 aa)) is disordered. The span at 52-80 (SPNAAVPEAIPTPRAAASAALELPLGPAP) shows a compositional bias: low complexity. Positions 108–166 (RQRFRQFRYQDAAGPREAFRQLRELSRQWLRPDIRTKEQIVEMLVQEQLLAILPEAARA) constitute an SCAN box domain.

As to quaternary structure, interacts with ZNF202.

It is found in the nucleus. Functionally, may regulate transcriptional activity. The protein is SCAN domain-containing protein 1 (SCAND1) of Pan paniscus (Pygmy chimpanzee).